A 143-amino-acid chain; its full sequence is Large ribosomal subunit protein uL11 (143 aa).

The protein belongs to the universal ribosomal protein uL11 family. In terms of assembly, part of the ribosomal stalk of the 50S ribosomal subunit. Interacts with L10 and the large rRNA to form the base of the stalk. L10 forms an elongated spine to which L12 dimers bind in a sequential fashion forming a multimeric L10(L12)X complex. In terms of processing, one or more lysine residues are methylated.

Forms part of the ribosomal stalk which helps the ribosome interact with GTP-bound translation factors. The polypeptide is Large ribosomal subunit protein uL11 (Cupriavidus pinatubonensis (strain JMP 134 / LMG 1197) (Cupriavidus necator (strain JMP 134))).